We begin with the raw amino-acid sequence, 261 residues long: tRNA pseudouridine synthase A (261 aa).

Asp51 acts as the Nucleophile in catalysis. Residue Tyr109 coordinates substrate.

It belongs to the tRNA pseudouridine synthase TruA family. Homodimer.

It carries out the reaction uridine(38/39/40) in tRNA = pseudouridine(38/39/40) in tRNA. In terms of biological role, formation of pseudouridine at positions 38, 39 and 40 in the anticodon stem and loop of transfer RNAs. This chain is tRNA pseudouridine synthase A, found in Shewanella halifaxensis (strain HAW-EB4).